The primary structure comprises 113 residues: U11-theraphotoxin-Hhn1p (113 aa).

Positions 1–21 are cleaved as a signal peptide; sequence MNTVRVTFLLVFVLAVSLGQA. Residues 22 to 74 constitute a propeptide that is removed on maturation; the sequence is DKDENRMEMQEKTEQGKSYLDFAENLLLQKLEELEAKLLEEDSEESRNSRQKR. A disordered region spans residues 61–83; that stretch reads EEDSEESRNSRQKRCIGEGVPCD. Intrachain disulfides connect Cys-75-Cys-90, Cys-82-Cys-95, and Cys-89-Cys-110.

This sequence belongs to the neurotoxin 14 (magi-1) family. 01 (HNTX-16) subfamily. In terms of tissue distribution, expressed by the venom gland.

The protein resides in the secreted. In terms of biological role, probable ion channel inhibitor. The protein is U11-theraphotoxin-Hhn1p of Cyriopagopus hainanus (Chinese bird spider).